Here is a 173-residue protein sequence, read N- to C-terminus: NADH-quinone oxidoreductase subunit I 1 (173 aa).

2 4Fe-4S ferredoxin-type domains span residues 41-73 (IVLT…LAKA) and 83-112 (EHFR…LTPD). Residues Cys53, Cys56, Cys59, Cys63, Cys92, Cys95, Cys98, and Cys102 each coordinate [4Fe-4S] cluster.

This sequence belongs to the complex I 23 kDa subunit family. As to quaternary structure, NDH-1 is composed of 14 different subunits. Subunits NuoA, H, J, K, L, M, N constitute the membrane sector of the complex. [4Fe-4S] cluster serves as cofactor.

The protein localises to the cell inner membrane. The enzyme catalyses a quinone + NADH + 5 H(+)(in) = a quinol + NAD(+) + 4 H(+)(out). Its function is as follows. NDH-1 shuttles electrons from NADH, via FMN and iron-sulfur (Fe-S) centers, to quinones in the respiratory chain. The immediate electron acceptor for the enzyme in this species is believed to be ubiquinone. Couples the redox reaction to proton translocation (for every two electrons transferred, four hydrogen ions are translocated across the cytoplasmic membrane), and thus conserves the redox energy in a proton gradient. In Rhodopseudomonas palustris (strain BisA53), this protein is NADH-quinone oxidoreductase subunit I 1.